Consider the following 106-residue polypeptide: UPF0145 protein azo0572 (106 aa).

Belongs to the UPF0145 family.

The polypeptide is UPF0145 protein azo0572 (Azoarcus sp. (strain BH72)).